The chain runs to 246 residues: tRNA pseudouridine synthase A (246 aa).

Aspartate 52 (nucleophile) is an active-site residue. Tyrosine 111 provides a ligand contact to substrate.

Belongs to the tRNA pseudouridine synthase TruA family. Homodimer.

It carries out the reaction uridine(38/39/40) in tRNA = pseudouridine(38/39/40) in tRNA. In terms of biological role, formation of pseudouridine at positions 38, 39 and 40 in the anticodon stem and loop of transfer RNAs. The polypeptide is tRNA pseudouridine synthase A (Borreliella burgdorferi (strain ZS7) (Borrelia burgdorferi)).